Here is a 484-residue protein sequence, read N- to C-terminus: Glutamyl-tRNA(Gln) amidotransferase subunit A (484 aa).

Catalysis depends on charge relay system residues lysine 77 and serine 152. The active-site Acyl-ester intermediate is the serine 176.

This sequence belongs to the amidase family. GatA subfamily. Heterotrimer of A, B and C subunits.

The enzyme catalyses L-glutamyl-tRNA(Gln) + L-glutamine + ATP + H2O = L-glutaminyl-tRNA(Gln) + L-glutamate + ADP + phosphate + H(+). In terms of biological role, allows the formation of correctly charged Gln-tRNA(Gln) through the transamidation of misacylated Glu-tRNA(Gln) in organisms which lack glutaminyl-tRNA synthetase. The reaction takes place in the presence of glutamine and ATP through an activated gamma-phospho-Glu-tRNA(Gln). The protein is Glutamyl-tRNA(Gln) amidotransferase subunit A of Pseudomonas aeruginosa (strain ATCC 15692 / DSM 22644 / CIP 104116 / JCM 14847 / LMG 12228 / 1C / PRS 101 / PAO1).